A 358-amino-acid polypeptide reads, in one-letter code: UDP-N-acetylglucosamine--N-acetylmuramyl-(pentapeptide) pyrophosphoryl-undecaprenol N-acetylglucosamine transferase (358 aa).

Residues Thr-10–Gly-12, Asn-124, Arg-165, Ser-187, Ile-243, and Gln-288 contribute to the UDP-N-acetyl-alpha-D-glucosamine site.

The protein belongs to the glycosyltransferase 28 family. MurG subfamily.

Its subcellular location is the cell inner membrane. The enzyme catalyses di-trans,octa-cis-undecaprenyl diphospho-N-acetyl-alpha-D-muramoyl-L-alanyl-D-glutamyl-meso-2,6-diaminopimeloyl-D-alanyl-D-alanine + UDP-N-acetyl-alpha-D-glucosamine = di-trans,octa-cis-undecaprenyl diphospho-[N-acetyl-alpha-D-glucosaminyl-(1-&gt;4)]-N-acetyl-alpha-D-muramoyl-L-alanyl-D-glutamyl-meso-2,6-diaminopimeloyl-D-alanyl-D-alanine + UDP + H(+). The protein operates within cell wall biogenesis; peptidoglycan biosynthesis. Its function is as follows. Cell wall formation. Catalyzes the transfer of a GlcNAc subunit on undecaprenyl-pyrophosphoryl-MurNAc-pentapeptide (lipid intermediate I) to form undecaprenyl-pyrophosphoryl-MurNAc-(pentapeptide)GlcNAc (lipid intermediate II). The chain is UDP-N-acetylglucosamine--N-acetylmuramyl-(pentapeptide) pyrophosphoryl-undecaprenol N-acetylglucosamine transferase from Syntrophotalea carbinolica (strain DSM 2380 / NBRC 103641 / GraBd1) (Pelobacter carbinolicus).